A 456-amino-acid chain; its full sequence is Alcohol acyl transferase 1 allele GSc (456 aa).

Catalysis depends on proton acceptor residues His-165 and Asn-386.

It belongs to the plant acyltransferase family. In terms of tissue distribution, expressed at very low levels in the skin of ripe fruit.

In terms of biological role, involved in the biosynthesis of volatile esters which confer ripe apple fruit flavor. Alcohol acyl transferase that can use a wide range of alcohols as substrate to produce esters. The polypeptide is Alcohol acyl transferase 1 allele GSc (Malus domestica (Apple)).